Here is a 245-residue protein sequence, read N- to C-terminus: tRNA1(Val) (adenine(37)-N6)-methyltransferase (245 aa).

This sequence belongs to the methyltransferase superfamily. tRNA (adenine-N(6)-)-methyltransferase family.

The protein resides in the cytoplasm. The catalysed reaction is adenosine(37) in tRNA1(Val) + S-adenosyl-L-methionine = N(6)-methyladenosine(37) in tRNA1(Val) + S-adenosyl-L-homocysteine + H(+). Its function is as follows. Specifically methylates the adenine in position 37 of tRNA(1)(Val) (anticodon cmo5UAC). This chain is tRNA1(Val) (adenine(37)-N6)-methyltransferase, found in Salmonella paratyphi C (strain RKS4594).